A 91-amino-acid chain; its full sequence is Putative 26S proteasome complex subunit sem-1 (91 aa).

A disordered region spans residues 1-73 (MASTQPKNDA…SWDDDDTSDD (73 aa)). Basic and acidic residues predominate over residues 8–28 (NDAKSTEPKPEQPVTEKKTAV). Composition is skewed to acidic residues over residues 29–48 (LEED…AEDT) and 63–72 (ESWDDDDTSD).

This sequence belongs to the DSS1/SEM1 family. In terms of assembly, part of the 26S proteasome.

Functionally, subunit of the 26S proteasome which plays a role in ubiquitin-dependent proteolysis. The polypeptide is Putative 26S proteasome complex subunit sem-1 (sem-1) (Neurospora crassa (strain ATCC 24698 / 74-OR23-1A / CBS 708.71 / DSM 1257 / FGSC 987)).